Consider the following 704-residue polypeptide: Preterpestacin I synthase tpcA (704 aa).

A terpene cyclase region spans residues 1 to 329 (MEQLSYQSKL…CSACPRQNAW (329 aa)). Asp96 is a Mg(2+) binding site. Substrate-binding positions include Asp96, Asn231, 235 to 239 (SWERE), and 325 to 326 (RQ). The DDXXD 1 signature appears at 96-100 (DDGGE). The short motif at 231-239 (NDYFSWERE) is the NSE/DTE element. The prenyltransferase stretch occupies residues 330-688 (KDMSSQSLNG…MLRLCLAKLS (359 aa)). The interval 361 to 380 (KDSSFFGSQPSDDEPSLSEV) is disordered. Residues Lys406, Arg409, and His438 each coordinate isopentenyl diphosphate. 2 residues coordinate Mg(2+): Asp445 and Asp449. Residues 445-449 (DDLED) carry the DDXXD 2 motif. Arg454 is a binding site for dimethylallyl diphosphate. Residue Arg455 participates in isopentenyl diphosphate binding. Residues Lys532, Thr533, Gln568, Asn575, Lys583, and Lys593 each coordinate dimethylallyl diphosphate.

The protein in the N-terminal section; belongs to the terpene synthase family. This sequence in the C-terminal section; belongs to the FPP/GGPP synthase family. In terms of assembly, hexamer. Mg(2+) serves as cofactor.

It catalyses the reaction isopentenyl diphosphate + (2E,6E)-farnesyl diphosphate = (2E,6E,10E)-geranylgeranyl diphosphate + diphosphate. The enzyme catalyses isopentenyl diphosphate + (2E,6E,10E)-geranylgeranyl diphosphate = (2E,6E,10E,14E)-geranylfarnesyl diphosphate + diphosphate. The protein operates within secondary metabolite biosynthesis; terpenoid biosynthesis. Its function is as follows. Bifunctional terpene synthase; part of the gene cluster that mediates the biosynthesis of terpestacin. The bifunctional terpene synthase tpcA converts isopentenyl diphosphate (IPP) and dimethylallyl diphosphate (DMAPP) into the sesterterpene preterpestacin I. The C-terminal prenyltransferase (PT) domain of tpcA catalyzes formation of GFPP, whereas the N-terminal terpene cyclase (TC) domain catalyzes the cyclization of GFPP into preterpestacin I. The cytochrome P450 monooxygenase tpcB then hydroxylates preterpestacin I to yield 24-hydroxypreterpstacin I (renamed as preterpestacin II) whereas the cytochrome P450 monooxygenase tpcC further hydroxylates preterpestacin II to yield 16,17-dihydroxypreterpestacin II (renamed as preterpestacin III). Finally, the FAD-dependent monooxygenase tpcD converts preterpestacin III into terpestacin. This is Preterpestacin I synthase tpcA from Cochliobolus heterostrophus (strain C5 / ATCC 48332 / race O) (Southern corn leaf blight fungus).